The following is a 438-amino-acid chain: Glutamyl-tRNA(Gln) amidotransferase subunit D (438 aa).

Residues 92-422 form the Asparaginase/glutaminase domain; sequence PTITILGTGG…REAKKMMLTN (331 aa). Residues threonine 102, threonine 178, aspartate 179, and lysine 256 contribute to the active site.

This sequence belongs to the asparaginase 1 family. GatD subfamily. In terms of assembly, heterodimer of GatD and GatE.

The enzyme catalyses L-glutamyl-tRNA(Gln) + L-glutamine + ATP + H2O = L-glutaminyl-tRNA(Gln) + L-glutamate + ADP + phosphate + H(+). In terms of biological role, allows the formation of correctly charged Gln-tRNA(Gln) through the transamidation of misacylated Glu-tRNA(Gln) in organisms which lack glutaminyl-tRNA synthetase. The reaction takes place in the presence of glutamine and ATP through an activated gamma-phospho-Glu-tRNA(Gln). The GatDE system is specific for glutamate and does not act on aspartate. The chain is Glutamyl-tRNA(Gln) amidotransferase subunit D from Pyrococcus furiosus (strain ATCC 43587 / DSM 3638 / JCM 8422 / Vc1).